The sequence spans 496 residues: Aspartyl/glutamyl-tRNA(Asn/Gln) amidotransferase subunit B (496 aa).

Belongs to the GatB/GatE family. GatB subfamily. Heterotrimer of A, B and C subunits.

It carries out the reaction L-glutamyl-tRNA(Gln) + L-glutamine + ATP + H2O = L-glutaminyl-tRNA(Gln) + L-glutamate + ADP + phosphate + H(+). The catalysed reaction is L-aspartyl-tRNA(Asn) + L-glutamine + ATP + H2O = L-asparaginyl-tRNA(Asn) + L-glutamate + ADP + phosphate + 2 H(+). Its function is as follows. Allows the formation of correctly charged Asn-tRNA(Asn) or Gln-tRNA(Gln) through the transamidation of misacylated Asp-tRNA(Asn) or Glu-tRNA(Gln) in organisms which lack either or both of asparaginyl-tRNA or glutaminyl-tRNA synthetases. The reaction takes place in the presence of glutamine and ATP through an activated phospho-Asp-tRNA(Asn) or phospho-Glu-tRNA(Gln). In Prochlorococcus marinus (strain MIT 9303), this protein is Aspartyl/glutamyl-tRNA(Asn/Gln) amidotransferase subunit B.